The chain runs to 574 residues: Membrane protein insertase YidC (574 aa).

The next 6 helical transmembrane spans lie at 6–26 (VFLI…WGKE), 350–370 (VIDY…FWVL), 376–396 (FLHN…LVLY), 447–467 (GGCL…WVLV), 491–511 (FILP…TPTP), and 525–545 (PLVF…YWVV).

It belongs to the OXA1/ALB3/YidC family. Type 1 subfamily. Interacts with the Sec translocase complex via SecD. Specifically interacts with transmembrane segments of nascent integral membrane proteins during membrane integration.

The protein localises to the cell inner membrane. In terms of biological role, required for the insertion and/or proper folding and/or complex formation of integral membrane proteins into the membrane. Involved in integration of membrane proteins that insert both dependently and independently of the Sec translocase complex, as well as at least some lipoproteins. Aids folding of multispanning membrane proteins. The chain is Membrane protein insertase YidC from Xanthomonas oryzae pv. oryzae (strain KACC10331 / KXO85).